The primary structure comprises 277 residues: Peptide deformylase 1A, chloroplastic (277 aa).

The Zn(2+) site is built by cysteine 196 and histidine 238. Residue glutamate 239 is part of the active site. Residue histidine 242 coordinates Zn(2+).

It belongs to the polypeptide deformylase family. Zn(2+) is required as a cofactor.

The protein resides in the plastid. It localises to the chloroplast stroma. The catalysed reaction is N-terminal N-formyl-L-methionyl-[peptide] + H2O = N-terminal L-methionyl-[peptide] + formate. In terms of biological role, removes the formyl group from the N-terminal Met of newly synthesized proteins. In Solanum lycopersicum (Tomato), this protein is Peptide deformylase 1A, chloroplastic (PDF1A).